Here is a 395-residue protein sequence, read N- to C-terminus: Protein PIN-LIKES 7 (395 aa).

The Lumenal portion of the chain corresponds to 1–8 (MGFLELLE). The helical transmembrane segment at 9–29 (VASMPIVQVLLISVLGAFLAT) threads the bilayer. Topologically, residues 30 to 45 (DYCSLLSADTRRSVNK) are cytoplasmic. A helical membrane pass occupies residues 46-66 (LVFVVFTPCIMFANLAETVTL). Residues 67–73 (QDIISWW) lie on the Lumenal side of the membrane. The helical transmembrane segment at 74-94 (FMPINVGITFLVGGILGWLVV) threads the bilayer. The Cytoplasmic portion of the chain corresponds to 95–106 (KLLNPKPQLHGL). A helical transmembrane segment spans residues 107-127 (IIATCASGNMGNLMLILVPAI). At 128–142 (CDEEGSPFGNRSVCR) the chain is on the lumenal side. Residues 143–163 (SIGLSYASFSMALGGFYIWTY) form a helical membrane-spanning segment. Over 164-232 (SYQLVRSSAT…KDLLHQILEE (69 aa)) the chain is Cytoplasmic. The helical transmembrane segment at 233–253 (LFAPPTIGAILGFVFGATNWL) threads the bilayer. Residues 254 to 272 (RNLIIGENAPLRVIQDSVK) are Lumenal-facing. A helical transmembrane segment spans residues 273–293 (LLGEGTIPCITLILGGNLIQG). The Cytoplasmic segment spans residues 294 to 302 (LRSSAVKKS). Residues 303–323 (VIVGVIIVRYILLPVVGVGVV) traverse the membrane as a helical segment. The Lumenal portion of the chain corresponds to 324 to 340 (QLAGNLGYLPPDPLFRY). Residues 341 to 361 (VLMLQFALPPAMNISTMAQLF) form a helical membrane-spanning segment. Residues 362–369 (DVAQDECS) lie on the Cytoplasmic side of the membrane. Residues 370–390 (VIFLWTYLVASLALTVWSTIF) form a helical membrane-spanning segment. The Lumenal segment spans residues 391–395 (LSILS).

Belongs to the auxin efflux carrier (TC 2.A.69.2) family. As to expression, expressed in seedlings, rosette and cauline leaves, stems and flowers.

The protein localises to the endoplasmic reticulum membrane. Its function is as follows. Involved in cellular auxin homeostasis by regulating auxin metabolism. Regulates intracellular auxin accumulation at the endoplasmic reticulum and thus auxin availability for nuclear auxin signaling. In Arabidopsis thaliana (Mouse-ear cress), this protein is Protein PIN-LIKES 7.